A 307-amino-acid polypeptide reads, in one-letter code: Olfactory receptor 8K5 (307 aa).

The Extracellular segment spans residues Met-1 to Ile-25. Asn-5 carries N-linked (GlcNAc...) asparagine glycosylation. The helical transmembrane segment at Pro-26 to Ile-46 threads the bilayer. Residues Ile-47–His-54 are Cytoplasmic-facing. A helical membrane pass occupies residues Leu-55 to Thr-75. At Val-76 to Ala-99 the chain is on the extracellular side. Cys-97 and Cys-189 are disulfide-bonded. A helical membrane pass occupies residues Gln-100–Tyr-120. Over Asp-121–Arg-139 the chain is Cytoplasmic. The chain crosses the membrane as a helical span at residues Leu-140–Thr-160. Residues Ile-161–Leu-197 are Extracellular-facing. A helical transmembrane segment spans residues Leu-198–Ser-217. At Tyr-218–Ala-237 the chain is on the cytoplasmic side. A helical membrane pass occupies residues Phe-238 to Met-258. At Tyr-259–Asp-271 the chain is on the extracellular side. N-linked (GlcNAc...) asparagine glycosylation is present at Asn-263. A helical transmembrane segment spans residues Lys-272–Leu-292. Residues Arg-293 to Asn-307 are Cytoplasmic-facing.

This sequence belongs to the G-protein coupled receptor 1 family.

Its subcellular location is the cell membrane. Functionally, odorant receptor. The sequence is that of Olfactory receptor 8K5 (OR8K5) from Homo sapiens (Human).